A 349-amino-acid polypeptide reads, in one-letter code: Hypoxia-inducible factor 1-alpha inhibitor (349 aa).

A compositionally biased stretch (low complexity) spans 1-14 (MAATAAEVAASGSG). The tract at residues 1-51 (MAATAAEVAASGSGEAREEAEAPGPAWDESQLRSYSFPTRPIPRLSQSDPR) is disordered. At Ala-2 the chain carries N-acetylalanine. The interaction with VHL stretch occupies residues 2–125 (AATAAEVAAS…PRSNREEIKF (124 aa)). The 166-residue stretch at 142–307 (ERLYLQQTLN…KGAPTPKRIE (166 aa)) folds into the JmjC domain. Tyr-145 serves as a coordination point for 2-oxoglutarate. Substrate is bound by residues Asp-152 and 181 to 183 (QLT). Thr-196 is a binding site for 2-oxoglutarate. Fe cation contacts are provided by His-199 and Asp-201. Residue 201 to 203 (DEQ) participates in substrate binding. 2-oxoglutarate contacts are provided by Asn-205 and Lys-214. A substrate-binding site is contributed by 238–239 (RQ). Residue His-279 coordinates Fe cation. Residue Asn-294 coordinates 2-oxoglutarate. Residues Ala-300 and Asn-321 each coordinate substrate.

Homodimer; homodimerization is essential for catalytic activity. Interacts with VHL and HIF1A. Part of a complex with VHL, HIF1A and HDAC1 or HDAC2 or HDAC3. Interacts with NFKB1 and NFKBIA. Interacts with NOTCH1, NOTCH2 and NOTCH3 but not with NOTCH4. Interacts with ABPA3. Interacts with TNKS2. Interacts with PPP1R12A. Interacts with UBE3A. Interacts with ASB4. Interacts with ANKS3. Interacts with NECAB3; the interaction is indirect and seems to be mediated by APBA3. It depends on Fe(2+) as a cofactor.

The protein localises to the nucleus. It is found in the cytoplasm. Its subcellular location is the perinuclear region. The enzyme catalyses L-asparaginyl-[hypoxia-inducible factor alpha subunit] + 2-oxoglutarate + O2 = (3S)-3-hydroxy-L-asparaginyl-[hypoxia-inducible factor alpha subunit] + succinate + CO2. It catalyses the reaction L-histidyl-[ankyrin-repeat domain protein] + 2-oxoglutarate + O2 = (3S)-3-hydroxy-L-histidyl-[ankyrin-repeat domain protein] + succinate + CO2. The catalysed reaction is L-asparaginyl-[ankyrin-repeat domain protein] + 2-oxoglutarate + O2 = (3S)-3-hydroxy-L-asparaginyl-[ankyrin-repeat domain protein] + succinate + CO2. It carries out the reaction L-aspartyl-[ankyrin-repeat domain protein] + 2-oxoglutarate + O2 = (3S)-3-hydroxy-L-aspartyl-[ankyrin-repeat domain protein] + succinate + CO2. Functionally, hydroxylates HIF-1 alpha at 'Asn-799' in the C-terminal transactivation domain (CAD). Functions as an oxygen sensor and, under normoxic conditions, the hydroxylation prevents interaction of HIF-1 with transcriptional coactivators including Cbp/p300-interacting transactivator. Involved in transcriptional repression through interaction with HIF1A, VHL and histone deacetylases. Hydroxylates specific Asn residues within ankyrin repeat domains (ARD) of NFKB1, NFKBIA, NOTCH1, ASB4, PPP1R12A and several other ARD-containing proteins. Also hydroxylates Asp and His residues within ARDs of ANK1 and TNKS2, respectively. Negatively regulates NOTCH1 activity, accelerating myogenic differentiation. Positively regulates ASB4 activity, promoting vascular differentiation. The protein is Hypoxia-inducible factor 1-alpha inhibitor (Hif1an) of Mus musculus (Mouse).